The primary structure comprises 378 residues: SPbeta prophage-derived uncharacterized protein YorJ (378 aa).

This chain is SPbeta prophage-derived uncharacterized protein YorJ (yorJ), found in Bacillus subtilis (strain 168).